The primary structure comprises 135 residues: Retinol-binding protein 1 (135 aa).

Position 9 is an omega-N-methylarginine (tryptophan 9). An important for interaction with STRA6 region spans residues arginine 22 to lysine 32. All-trans-retinol is bound by residues lysine 41, methionine 63, and glutamine 109.

It belongs to the calycin superfamily. Fatty-acid binding protein (FABP) family. In terms of assembly, interacts (only as retinol-free apoprotein) with STRA6. Detected in nearly all the tissues with higher expression in adult ovary, pancreas, pituitary gland and adrenal gland, and fetal liver.

It is found in the cytoplasm. The protein resides in the lipid droplet. Functionally, cytoplasmic retinol-binding protein. Accepts retinol from the transport protein STRA6, and thereby contributes to retinol uptake, storage and retinoid homeostasis. The polypeptide is Retinol-binding protein 1 (RBP1) (Homo sapiens (Human)).